The chain runs to 288 residues: Nucleotide-binding protein APP7_0339 (288 aa).

8–15 is an ATP binding site; the sequence is GRSGSGKS. Position 56 to 59 (56 to 59) interacts with GTP; the sequence is DIRN.

Belongs to the RapZ-like family.

Its function is as follows. Displays ATPase and GTPase activities. The chain is Nucleotide-binding protein APP7_0339 from Actinobacillus pleuropneumoniae serotype 7 (strain AP76).